We begin with the raw amino-acid sequence, 117 residues long: Large ribosomal subunit protein uL18 (117 aa).

This sequence belongs to the universal ribosomal protein uL18 family. As to quaternary structure, part of the 50S ribosomal subunit; part of the 5S rRNA/L5/L18/L25 subcomplex. Contacts the 5S and 23S rRNAs.

This is one of the proteins that bind and probably mediate the attachment of the 5S RNA into the large ribosomal subunit, where it forms part of the central protuberance. This is Large ribosomal subunit protein uL18 from Vibrio cholerae serotype O1 (strain ATCC 39541 / Classical Ogawa 395 / O395).